Reading from the N-terminus, the 710-residue chain is Polyribonucleotide nucleotidyltransferase (710 aa).

Asp-487 and Asp-493 together coordinate Mg(2+). The KH domain occupies 554 to 613; it reads PRIHTMKISAEKIKDVIGKGGAVIRALTEETGTTIEIEDDGTIKIAATEGAAAKEAIRRI. Positions 623-691 constitute an S1 motif domain; sequence GRIYTGKVAR…RQGRVRLSMK (69 aa). A disordered region spans residues 691–710; sequence KEAVEKPAEEANDASEAKGE.

The protein belongs to the polyribonucleotide nucleotidyltransferase family. Component of the RNA degradosome, which is a multiprotein complex involved in RNA processing and mRNA degradation. The cofactor is Mg(2+).

The protein localises to the cytoplasm. It carries out the reaction RNA(n+1) + phosphate = RNA(n) + a ribonucleoside 5'-diphosphate. Functionally, involved in mRNA degradation. Catalyzes the phosphorolysis of single-stranded polyribonucleotides processively in the 3'- to 5'-direction. In Vibrio campbellii (strain ATCC BAA-1116), this protein is Polyribonucleotide nucleotidyltransferase.